Here is a 1698-residue protein sequence, read N- to C-terminus: Protein 4.1 homolog (1698 aa).

The interval 1–31 (MPAEIKPSAPAEPETPTKSKPKSSSSSHGKP) is disordered. The segment covering 12 to 27 (EPETPTKSKPKSSSSS) has biased composition (low complexity). An FERM domain is found at 32-314 (ALARVTLLDG…EHHTFFRLMT (283 aa)). A hydrophilic region spans residues 317 to 434 (PVSKSKMFPV…KEEKERKERE (118 aa)). 2 disordered regions span residues 335–361 (GRTQ…SGAR) and 374–710 (EKEK…SDPT). The segment covering 374 to 448 (EKEKVARKSS…EEKKKAEKAA (75 aa)) has biased composition (basic and acidic residues). The span at 449-461 (KAALAAGAAAGAA) shows a compositional bias: low complexity. Phosphoserine occurs at positions 471, 474, and 478. The span at 499–514 (KDGKDKSGKDKDKEVG) shows a compositional bias: basic and acidic residues. A compositionally biased stretch (polar residues) spans 562 to 571 (DGNTSPTRKS). Phosphoserine is present on Ser566. A compositionally biased stretch (basic and acidic residues) spans 579–589 (YDQDPNSRKSG). The span at 594 to 603 (EQLSPTSQQK) shows a compositional bias: polar residues. The segment covering 618 to 627 (ALKETAEKLK) has biased composition (basic and acidic residues). Phosphoserine occurs at positions 659 and 687. Positions 684–696 (RSYSPTKGPQGYS) are enriched in polar residues. Thr689 is subject to Phosphothreonine. Phosphoserine is present on residues Ser697, Ser1398, Ser1401, and Ser1402. The segment at 1286–1698 (GEIVQVDPND…EKIEIQQQTQ (413 aa)) is C-terminal (CTD). Residue Thr1407 is modified to Phosphothreonine. A compositionally biased stretch (basic and acidic residues) spans 1509–1532 (LGKNAKTEQLEEKTVATTRTHDPN). The segment at 1509–1599 (LGKNAKTEQL…SPLFTTSATT (91 aa)) is disordered. Positions 1533–1554 (KQQQRVVTQEVKTTATVTSGDQ) are enriched in polar residues. Residues 1561 to 1571 (VSSTSSGDSGT) are compositionally biased toward low complexity. The span at 1584–1599 (RTDNQKSPLFTTSATT) shows a compositional bias: polar residues. The residue at position 1590 (Ser1590) is a Phosphoserine.

As to expression, at onset of germ band retraction, expression is seen in epidermis, hindgut and foregut. During retraction, expression extends to tracheal branches and salivary glands.

It localises to the cell junction. It is found in the septate junction. An integral component of the septate junction. May play a role in cell-cell interactions that are necessary for proper development. Vital for embryonic development. The polypeptide is Protein 4.1 homolog (cora) (Drosophila melanogaster (Fruit fly)).